A 130-amino-acid polypeptide reads, in one-letter code: Histone H2A.1 (130 aa).

The interval 1 to 21 (MSGGKGKVGSSEKASTSRSAK) is disordered. At Ser2 the chain carries N-acetylserine. Lys5 and Lys7 each carry N6-acetyllysine. Position 105 is an N5-methylglutamine (Gln105). Ser127 is subject to Phosphoserine. A [ST]-Q motif motif is present at residues 127 to 128 (SQ).

Belongs to the histone H2A family. As to quaternary structure, the nucleosome is a histone octamer containing two molecules each of H2A, H2B, H3 and H4 assembled in one H3-H4 heterotetramer and two H2A-H2B heterodimers. The octamer wraps approximately 147 bp of DNA. Post-translationally, phosphorylated to form H2AS128ph (gamma-H2A) in response to DNA double-strand breaks (DSBs) generated by exogenous genotoxic agents and by stalled replication forks. Phosphorylation is dependent on the DNA damage checkpoint kinases MEC1/ATR and TEL1/ATM, spreads on either side of a detected DSB site and may mark the surrounding chromatin for recruitment of proteins required for DNA damage signaling and repair. Gamma-H2A is removed from the DNA prior to the strand invasion-primer extension step of the repair process and subsequently dephosphorylated. Dephosphorylation is necessary for efficient recovery from the DNA damage checkpoint. In terms of processing, acetylated by ESA1 to form H2AK4ac and H2AK7ac.

Its subcellular location is the nucleus. It is found in the chromosome. Core component of nucleosome which plays a central role in DNA double strand break (DSB) repair. Nucleosomes wrap and compact DNA into chromatin, limiting DNA accessibility to the cellular machineries which require DNA as a template. Histones thereby play a central role in transcription regulation, DNA repair, DNA replication and chromosomal stability. DNA accessibility is regulated via a complex set of post-translational modifications of histones, also called histone code, and nucleosome remodeling. The sequence is that of Histone H2A.1 (HTA1) from Meyerozyma guilliermondii (strain ATCC 6260 / CBS 566 / DSM 6381 / JCM 1539 / NBRC 10279 / NRRL Y-324) (Yeast).